Here is a 156-residue protein sequence, read N- to C-terminus: Transcription elongation factor GreA (156 aa).

A coiled-coil region spans residues 44–67 (ENAEYEAAKEKQAMIEGRIQDLCQ).

Belongs to the GreA/GreB family.

In terms of biological role, necessary for efficient RNA polymerase transcription elongation past template-encoded arresting sites. The arresting sites in DNA have the property of trapping a certain fraction of elongating RNA polymerases that pass through, resulting in locked ternary complexes. Cleavage of the nascent transcript by cleavage factors such as GreA or GreB allows the resumption of elongation from the new 3'terminus. GreA releases sequences of 2 to 3 nucleotides. This chain is Transcription elongation factor GreA, found in Syntrophobacter fumaroxidans (strain DSM 10017 / MPOB).